Consider the following 161-residue polypeptide: Protein-export protein SecB (161 aa).

Belongs to the SecB family. In terms of assembly, homotetramer, a dimer of dimers. One homotetramer interacts with 1 SecA dimer.

Its subcellular location is the cytoplasm. In terms of biological role, one of the proteins required for the normal export of preproteins out of the cell cytoplasm. It is a molecular chaperone that binds to a subset of precursor proteins, maintaining them in a translocation-competent state. It also specifically binds to its receptor SecA. The polypeptide is Protein-export protein SecB (Pseudomonas putida (strain ATCC 700007 / DSM 6899 / JCM 31910 / BCRC 17059 / LMG 24140 / F1)).